A 224-amino-acid polypeptide reads, in one-letter code: 3-dehydroquinate dehydratase (224 aa).

3-dehydroquinate contacts are provided by residues Glu35–Arg37 and Arg65. His120 serves as the catalytic Proton donor/acceptor. Lys146 functions as the Schiff-base intermediate with substrate in the catalytic mechanism. Residues Arg183, Thr202, and Gln206 each contribute to the 3-dehydroquinate site.

Belongs to the type-I 3-dehydroquinase family. As to quaternary structure, homodimer.

It catalyses the reaction 3-dehydroquinate = 3-dehydroshikimate + H2O. It participates in metabolic intermediate biosynthesis; chorismate biosynthesis; chorismate from D-erythrose 4-phosphate and phosphoenolpyruvate: step 3/7. In terms of biological role, involved in the third step of the chorismate pathway, which leads to the biosynthesis of aromatic amino acids. Catalyzes the cis-dehydration of 3-dehydroquinate (DHQ) and introduces the first double bond of the aromatic ring to yield 3-dehydroshikimate. The protein is 3-dehydroquinate dehydratase of Methanobrevibacter smithii (strain ATCC 35061 / DSM 861 / OCM 144 / PS).